The sequence spans 538 residues: Growth factor receptor-bound protein 14 (538 aa).

Residues 1–20 (MTTSLQDGQSAAGRAGAQDS) are disordered. At Thr2 the chain carries N-acetylthreonine. The Ras-associating domain occupies 104-190 (KKQVIKVYSE…NKLYLRKNYA (87 aa)). The 109-residue stretch at 232-340 (YPEIHGFLHA…WVTAIRLLKD (109 aa)) folds into the PH domain. Ser370 and Ser373 each carry phosphoserine. The SH2 domain occupies 437 to 533 (WFHHRISRDE…VLPCKLKHYC (97 aa)).

Belongs to the GRB7/10/14 family. In terms of assembly, interacts with the cytoplasmic domain of the autophosphorylated insulin receptor, through the SH2 domain. Interacts with GRB14 (via BPS domain); this interaction protects the tyrosines in the activation loop on INSR from dephosphorylation. Binds to the ankyrin repeat region of TNKS2 via its N-terminus. Interacts with activated NRAS. Interacts (via SH2 domain) with TEK/TIE2 (tyrosine phosphorylated). Phosphorylated on serine residues. Phosphorylated on tyrosine residues by TEK/TIE2.

The protein resides in the cytoplasm. It localises to the endosome membrane. In terms of biological role, adapter protein which modulates coupling of cell surface receptor kinases with specific signaling pathways. Binds to, and suppresses signals from, the activated insulin receptor (INSR). Potent inhibitor of insulin-stimulated MAPK3 phosphorylation. Plays a critical role regulating PDPK1 membrane translocation in response to insulin stimulation and serves as an adapter protein to recruit PDPK1 to activated insulin receptor, thus promoting PKB/AKT1 phosphorylation and transduction of the insulin signal. In Mus musculus (Mouse), this protein is Growth factor receptor-bound protein 14 (Grb14).